The primary structure comprises 226 residues: Protein GrpE (226 aa).

Disordered stretches follow at residues 1–24 (MADEKNKPENPDLDQRDINNPRDR) and 205–226 (GVSKGGPKVSAENGASTSEDNA). Over residues 217-226 (NGASTSEDNA) the composition is skewed to polar residues.

Belongs to the GrpE family. Homodimer.

It is found in the cytoplasm. Its function is as follows. Participates actively in the response to hyperosmotic and heat shock by preventing the aggregation of stress-denatured proteins, in association with DnaK and GrpE. It is the nucleotide exchange factor for DnaK and may function as a thermosensor. Unfolded proteins bind initially to DnaJ; upon interaction with the DnaJ-bound protein, DnaK hydrolyzes its bound ATP, resulting in the formation of a stable complex. GrpE releases ADP from DnaK; ATP binding to DnaK triggers the release of the substrate protein, thus completing the reaction cycle. Several rounds of ATP-dependent interactions between DnaJ, DnaK and GrpE are required for fully efficient folding. This Brucella melitensis biotype 1 (strain ATCC 23456 / CCUG 17765 / NCTC 10094 / 16M) protein is Protein GrpE.